The chain runs to 312 residues: Ornithine carbamoyltransferase (312 aa).

Carbamoyl phosphate contacts are provided by residues 60–63 (STRT), Gln87, Arg111, and 138–141 (HPCQ). L-ornithine contacts are provided by residues Asn169, Asp229, and 233–234 (SM). Carbamoyl phosphate is bound by residues 268–269 (CL) and Arg296.

This sequence belongs to the aspartate/ornithine carbamoyltransferase superfamily. OTCase family.

It is found in the cytoplasm. It catalyses the reaction carbamoyl phosphate + L-ornithine = L-citrulline + phosphate + H(+). It participates in amino-acid biosynthesis; L-arginine biosynthesis; L-arginine from L-ornithine and carbamoyl phosphate: step 1/3. Functionally, reversibly catalyzes the transfer of the carbamoyl group from carbamoyl phosphate (CP) to the N(epsilon) atom of ornithine (ORN) to produce L-citrulline. This is Ornithine carbamoyltransferase from Rhodopseudomonas palustris (strain BisA53).